A 292-amino-acid polypeptide reads, in one-letter code: AKT-interacting protein (292 aa).

The span at 1–11 (MNPLWSMSSGS) shows a compositional bias: polar residues. Residues 1 to 64 (MNPLWSMSSG…SPAPAAQSTN (64 aa)) are disordered. Over residues 14-23 (KRAEGEEKTL) the composition is skewed to basic and acidic residues. A Phosphoserine modification is found at Ser-30. In terms of domain architecture, UBC core spans 74 to 222 (YLEYSLLAEF…VVDSVKVCTA (149 aa)).

It belongs to the ubiquitin-conjugating enzyme family. FTS subfamily. As to quaternary structure, component of the FTS/Hook/FHIP complex (FHF complex), composed of AKTIP/FTS, FHIP1B, and one or more members of the Hook family of proteins HOOK1, HOOK2, and HOOK3. Interacts directly with HOOK1, HOOK2 and HOOK3. The FHF complex associates with the homotypic vesicular sorting complex (the HOPS complex). Also interacts with AKT1. May interact with FHIP1A.

The protein resides in the cytoplasm. Its subcellular location is the cell membrane. Component of the FTS/Hook/FHIP complex (FHF complex). The FHF complex may function to promote vesicle trafficking and/or fusion via the homotypic vesicular protein sorting complex (the HOPS complex). Regulates apoptosis by enhancing phosphorylation and activation of AKT1. Increases release of TNFSF6 via the AKT1/GSK3B/NFATC1 signaling cascade. FHF complex promotes the distribution of AP-4 complex to the perinuclear area of the cell. The sequence is that of AKT-interacting protein (Aktip) from Rattus norvegicus (Rat).